Here is a 967-residue protein sequence, read N- to C-terminus: E3 ubiquitin-protein ligase arkadia-C (967 aa).

Disordered regions lie at residues 57-175 and 193-276; these read QQID…VSSL and RKRF…SGGM. Residues 112–131 are compositionally biased toward low complexity; it reads SSFSDCISSPSSSSHFGDSD. Residues 149-160 show a composition bias toward polar residues; sequence GINSTPRTQSAR. The span at 232–251 shows a compositional bias: low complexity; that stretch reads SSSSSSENDLSSESSSSSST. The SUMO interaction motif 1 (SIM) signature appears at 280 to 284; that stretch reads VVVIE. Positions 305–311 match the SUMO interaction motif 2 (SIM) motif; sequence EVEIVTV. Positions 321 to 343 are disordered; the sequence is LGHPRSHWGQNSQSGRTQEHRTR. The SUMO interaction motif 3 (SIM) signature appears at 360–364; that stretch reads VVDLT. Disordered stretches follow at residues 368–452, 482–548, 629–657, and 669–689; these read DDPT…MPRL, HSHH…LSNN, LHHQ…MDYV, and PSLT…LSTA. Positions 385-395 are enriched in low complexity; that stretch reads VSTVSSNTSTS. Positions 482–498 are enriched in basic residues; the sequence is HSHHFPHHHHHHHHHSS. Polar residues predominate over residues 629 to 642; that stretch reads LHHQTSACPHSNPA. Pro residues predominate over residues 643–654; that stretch reads SQPPPPPPPPPM. Positions 880–882 are ubiquitin binding; it reads YPH. Zn(2+) contacts are provided by Cys915 and Cys918. The RING-type; atypical zinc-finger motif lies at 915-956; it reads CTICLSILEEGEDVRRLPCMHLFHQVCVDQWLITNKKCPICR. The ubiquitin binding stretch occupies residues 930-934; the sequence is RLPCM. Positions 938 and 941 each coordinate Zn(2+).

The protein belongs to the Arkadia family. Monomer.

The protein localises to the nucleus. Its subcellular location is the cytoplasm. It localises to the PML body. It carries out the reaction S-ubiquitinyl-[E2 ubiquitin-conjugating enzyme]-L-cysteine + [acceptor protein]-L-lysine = [E2 ubiquitin-conjugating enzyme]-L-cysteine + N(6)-ubiquitinyl-[acceptor protein]-L-lysine.. It functions in the pathway protein modification; protein ubiquitination. Its activity is regulated as follows. Binds free ubiquitin non-covalently via its RING-type zinc finger. Ubiquitin-binding leads to enhance the E3 ubiquitin-protein ligase activity by stabilizing the ubiquitin-conjugating enzyme E2 (donor ubiquitin) in the 'closed' conformation and activating ubiquitin transfer. Functionally, E3 ubiquitin-protein ligase required for mesoderm patterning during embryonic development. Acts as an enhancer of the transcriptional responses of the smad2/smad3 effectors, which are activated downstream of BMP. Acts by mediating ubiquitination and degradation of SMAD inhibitors such as smad7, inducing their proteasomal degradation and thereby enhancing the transcriptional activity of TGF-beta and BMP. Specifically binds polysumoylated chains via SUMO interaction motifs (SIMs) and mediates ubiquitination of sumoylated substrates. The regulation of the BMP-SMAD signaling is however independent of sumoylation and is not dependent of SUMO interaction motifs (SIMs). In Xenopus laevis (African clawed frog), this protein is E3 ubiquitin-protein ligase arkadia-C (rnf111-c).